A 578-amino-acid chain; its full sequence is Trehalase (578 aa).

The N-terminal stretch at 1–19 (MPGSTWELHLLLLLGLGLG) is a signal peptide. Asn78 is a glycosylation site (N-linked (GlcNAc...) asparagine). Substrate is bound by residues Arg168, 175–176 (WD), Asn212, and 221–223 (RSQ). Asn261 carries an N-linked (GlcNAc...) asparagine glycan. Substrate-binding positions include 286 to 288 (RPE) and Gly319. Residue Asp321 is the Proton donor/acceptor of the active site. An N-linked (GlcNAc...) asparagine glycan is attached at Asn369. Glu514 acts as the Proton donor/acceptor in catalysis. Residue Glu528 participates in substrate binding. Ser555 is lipidated: GPI-anchor amidated serine. Positions 556–578 (GTQLALLEPHCLAAALLLSFLTR) are cleaved as a propeptide — removed in mature form.

Belongs to the glycosyl hydrolase 37 family. As to quaternary structure, homodimer; disulfide-linked. In terms of tissue distribution, expressed in small intestine, kidney, and to a lesser extent in liver.

Its subcellular location is the cell membrane. It carries out the reaction alpha,alpha-trehalose + H2O = alpha-D-glucose + beta-D-glucose. Intestinal trehalase is probably involved in the hydrolysis of ingested trehalose. This is Trehalase (TREH) from Oryctolagus cuniculus (Rabbit).